The chain runs to 231 residues: 5'-methylthioadenosine/S-adenosylhomocysteine nucleosidase (231 aa).

E12 serves as the catalytic Proton acceptor. Substrate contacts are provided by residues G78, M153, and 174-175; that span reads ME. The active-site Proton donor is D198.

Belongs to the PNP/UDP phosphorylase family. MtnN subfamily.

The catalysed reaction is S-adenosyl-L-homocysteine + H2O = S-(5-deoxy-D-ribos-5-yl)-L-homocysteine + adenine. It carries out the reaction S-methyl-5'-thioadenosine + H2O = 5-(methylsulfanyl)-D-ribose + adenine. The enzyme catalyses 5'-deoxyadenosine + H2O = 5-deoxy-D-ribose + adenine. The protein operates within amino-acid biosynthesis; L-methionine biosynthesis via salvage pathway; S-methyl-5-thio-alpha-D-ribose 1-phosphate from S-methyl-5'-thioadenosine (hydrolase route): step 1/2. Functionally, catalyzes the irreversible cleavage of the glycosidic bond in both 5'-methylthioadenosine (MTA) and S-adenosylhomocysteine (SAH/AdoHcy) to adenine and the corresponding thioribose, 5'-methylthioribose and S-ribosylhomocysteine, respectively. Also cleaves 5'-deoxyadenosine, a toxic by-product of radical S-adenosylmethionine (SAM) enzymes, into 5-deoxyribose and adenine. The sequence is that of 5'-methylthioadenosine/S-adenosylhomocysteine nucleosidase from Bacillus velezensis (strain DSM 23117 / BGSC 10A6 / LMG 26770 / FZB42) (Bacillus amyloliquefaciens subsp. plantarum).